Reading from the N-terminus, the 233-residue chain is MQNERRIAQRFLEDKQLPYSSNELITMALTHPSYAQEKNTVANNQRLEFLGDAVLNLVVAEYLYNHYGRKAEGELTKIRAKVVCEDALAIFARNINLGQYLLLGRGEEMSGGRKRKSILADAVEAVIGAIYLDQGLETVQRFIIRQLEELISETASGDYYDYKSKLQELVQARDKENVSYAIIEESGPAHAKVFVAGVYYREQLLATGEGKSKKEAEQKAAQKVLQDNLVPGT.

An RNase III domain is found at 8 to 135 (AQRFLEDKQL…VIGAIYLDQG (128 aa)). Glu48 lines the Mg(2+) pocket. Asp52 is a catalytic residue. Mg(2+) is bound by residues Asp121 and Glu124. Residue Glu124 is part of the active site. A DRBM domain is found at 161-230 (DYKSKLQELV…AQKVLQDNLV (70 aa)).

It belongs to the ribonuclease III family. Homodimer. The cofactor is Mg(2+).

It is found in the cytoplasm. The enzyme catalyses Endonucleolytic cleavage to 5'-phosphomonoester.. Digests double-stranded RNA. Involved in the processing of primary rRNA transcript to yield the immediate precursors to the large and small rRNAs (23S and 16S). Processes some mRNAs, and tRNAs when they are encoded in the rRNA operon. Processes pre-crRNA and tracrRNA of type II CRISPR loci if present in the organism. This chain is Ribonuclease 3, found in Syntrophomonas wolfei subsp. wolfei (strain DSM 2245B / Goettingen).